The chain runs to 306 residues: tRNA dimethylallyltransferase (306 aa).

9 to 16 (GPTAVGKT) provides a ligand contact to ATP. 11–16 (TAVGKT) lines the substrate pocket. An interaction with substrate tRNA region spans residues 34-37 (DSRQ).

This sequence belongs to the IPP transferase family. Monomer. Requires Mg(2+) as cofactor.

The catalysed reaction is adenosine(37) in tRNA + dimethylallyl diphosphate = N(6)-dimethylallyladenosine(37) in tRNA + diphosphate. In terms of biological role, catalyzes the transfer of a dimethylallyl group onto the adenine at position 37 in tRNAs that read codons beginning with uridine, leading to the formation of N6-(dimethylallyl)adenosine (i(6)A). The chain is tRNA dimethylallyltransferase from Roseiflexus castenholzii (strain DSM 13941 / HLO8).